The following is a 125-amino-acid chain: DNA-directed RNA polymerase subunit omega (125 aa).

Belongs to the RNA polymerase subunit omega family. In terms of assembly, the RNAP catalytic core consists of 2 alpha, 1 beta, 1 beta' and 1 omega subunit. When a sigma factor is associated with the core the holoenzyme is formed, which can initiate transcription.

The enzyme catalyses RNA(n) + a ribonucleoside 5'-triphosphate = RNA(n+1) + diphosphate. Functionally, promotes RNA polymerase assembly. Latches the N- and C-terminal regions of the beta' subunit thereby facilitating its interaction with the beta and alpha subunits. In Zymomonas mobilis subsp. mobilis (strain ATCC 31821 / ZM4 / CP4), this protein is DNA-directed RNA polymerase subunit omega.